The primary structure comprises 246 residues: Hsp70 nucleotide exchange factor fes-1 (246 aa).

Over residues 23-40 (QSYHSNGAPTPNNNSGPA) the composition is skewed to polar residues. A disordered region spans residues 23–63 (QSYHSNGAPTPNNNSGPATGTGAVATSPAPQVTGSGPRPVD). ARM repeat units follow at residues 48–92 (TSPA…DPSP), 113–152 (LDNA…TAVQ), 155–196 (QKTQ…SAVR), and 214–244 (HEVL…NKAK).

The protein belongs to the FES1 family.

It is found in the cytoplasm. Functions as a nucleotide exchange factor (NEF) for Hsp70 chaperones which accelerates the release of ADP. Required for fully efficient Hsp70-mediated folding of proteins. The protein is Hsp70 nucleotide exchange factor fes-1 (fes-1) of Neurospora crassa (strain ATCC 24698 / 74-OR23-1A / CBS 708.71 / DSM 1257 / FGSC 987).